The primary structure comprises 221 residues: Bcl-2-related ovarian killer protein homolog A (221 aa).

The short motif at 32–44 (KVLCRDYIHSRLH) is the BH4 element. A BH3 motif is present at residues 64–80 (VSSVLLWLGDELEYLRP). The short motif at 110–140 (EIFSTEYSRKGLEKHKGVTWGKIVSLYAVAG) is the BH1 element. Positions 173–187 (WLKKRGGWADITKCV) match the BH2 motif. A helical transmembrane segment spans residues 198 to 218 (WLVTAACACGHYLKAVVFYLL).

It belongs to the Bcl-2 family. As to expression, strongest expression in ovary and eye, weaker expression in gut, kidney and brain. Little expression in liver or heart.

The protein resides in the membrane. In terms of biological role, may play a role in apoptosis. Does not appear to show pro-apoptotic activity when expressed ectopically in early embryos. The chain is Bcl-2-related ovarian killer protein homolog A from Danio rerio (Zebrafish).